Here is a 190-residue protein sequence, read N- to C-terminus: Xanthine phosphoribosyltransferase (190 aa).

2 residues coordinate xanthine: Leu-20 and Asn-27. Position 128-132 (128-132 (ANGKA)) interacts with 5-phospho-alpha-D-ribose 1-diphosphate. Lys-156 provides a ligand contact to xanthine.

Belongs to the purine/pyrimidine phosphoribosyltransferase family. Xpt subfamily. As to quaternary structure, homodimer.

The protein localises to the cytoplasm. The catalysed reaction is XMP + diphosphate = xanthine + 5-phospho-alpha-D-ribose 1-diphosphate. The protein operates within purine metabolism; XMP biosynthesis via salvage pathway; XMP from xanthine: step 1/1. In terms of biological role, converts the preformed base xanthine, a product of nucleic acid breakdown, to xanthosine 5'-monophosphate (XMP), so it can be reused for RNA or DNA synthesis. The chain is Xanthine phosphoribosyltransferase from Finegoldia magna (strain ATCC 29328 / DSM 20472 / WAL 2508) (Peptostreptococcus magnus).